The sequence spans 37 residues: Protein YhiY (37 aa).

The chain is Protein YhiY from Escherichia coli (strain K12).